A 141-amino-acid polypeptide reads, in one-letter code: Deoxyuridine 5'-triphosphate nucleotidohydrolase (141 aa).

The protein belongs to the dUTPase family. Requires Mg(2+) as cofactor.

The enzyme catalyses dUTP + H2O = dUMP + diphosphate + H(+). It participates in pyrimidine metabolism; dUMP biosynthesis; dUMP from dCTP (dUTP route): step 2/2. This enzyme is involved in nucleotide metabolism: it produces dUMP, the immediate precursor of thymidine nucleotides and it decreases the intracellular concentration of dUTP so that uracil cannot be incorporated into DNA. In Chlorella (PBCV-1), this protein is Deoxyuridine 5'-triphosphate nucleotidohydrolase.